The sequence spans 335 residues: 4-hydroxythreonine-4-phosphate dehydrogenase (335 aa).

The substrate site is built by His-135 and Thr-136. His-165, His-210, and His-265 together coordinate a divalent metal cation. Substrate is bound by residues Lys-273, Asn-282, and Arg-291.

This sequence belongs to the PdxA family. Homodimer. Zn(2+) serves as cofactor. It depends on Mg(2+) as a cofactor. The cofactor is Co(2+).

Its subcellular location is the cytoplasm. It catalyses the reaction 4-(phosphooxy)-L-threonine + NAD(+) = 3-amino-2-oxopropyl phosphate + CO2 + NADH. Its pathway is cofactor biosynthesis; pyridoxine 5'-phosphate biosynthesis; pyridoxine 5'-phosphate from D-erythrose 4-phosphate: step 4/5. In terms of biological role, catalyzes the NAD(P)-dependent oxidation of 4-(phosphooxy)-L-threonine (HTP) into 2-amino-3-oxo-4-(phosphooxy)butyric acid which spontaneously decarboxylates to form 3-amino-2-oxopropyl phosphate (AHAP). The chain is 4-hydroxythreonine-4-phosphate dehydrogenase from Saccharophagus degradans (strain 2-40 / ATCC 43961 / DSM 17024).